A 183-amino-acid polypeptide reads, in one-letter code: Peptide deformylase (183 aa).

Fe cation is bound by residues Cys-110 and His-153. Glu-154 is a catalytic residue. Position 157 (His-157) interacts with Fe cation.

This sequence belongs to the polypeptide deformylase family. Requires Fe(2+) as cofactor.

The catalysed reaction is N-terminal N-formyl-L-methionyl-[peptide] + H2O = N-terminal L-methionyl-[peptide] + formate. Functionally, removes the formyl group from the N-terminal Met of newly synthesized proteins. Requires at least a dipeptide for an efficient rate of reaction. N-terminal L-methionine is a prerequisite for activity but the enzyme has broad specificity at other positions. This is Peptide deformylase from Listeria monocytogenes serotype 4a (strain HCC23).